The primary structure comprises 385 residues: MKKVSVFGSTGFIGKTTVGILSGNTEDFKVIALVAGSNVSLLAQQAKLLNAEMAVIADDAQYEELKRSLHGSGIRVAAGKEAVLEAAALSVDTAVMAITGIVALSAVMRLIESGVGTIALASKESVVCGGVLLRDAACKSGTRIVPVDSEHNAVFRLLSQGDNPYKITITASGGPFLHWSHDQLKSVTIEDALVHPVWKMGKKISVDSATMMNKALEVLEASYLFELGYRKIDVVIHPESIVHALAFYQDGTSTALMSLPDMSIPILHALYWPHRKEVSVREVDLIAYGKLTFIRPDFERFPALKAAFDILQSSERDVASIVFNAANEVAVESFLNSEITFLEIVNIVLHVMNKVPYGKVSSLADIMEYDLLGRCIAREVISDAS.

The NADPH site is built by threonine 10, glycine 11, isoleucine 13, glycine 36, and asparagine 38. Lysine 123 serves as a coordination point for 1-deoxy-D-xylulose 5-phosphate. Glutamate 124 serves as a coordination point for NADPH. A Mn(2+)-binding site is contributed by aspartate 148. 1-deoxy-D-xylulose 5-phosphate is bound by residues serine 149, glutamate 150, serine 172, and histidine 195. Position 150 (glutamate 150) interacts with Mn(2+). Residue glycine 201 coordinates NADPH. The 1-deoxy-D-xylulose 5-phosphate site is built by serine 208, asparagine 213, lysine 214, and glutamate 217. Position 217 (glutamate 217) interacts with Mn(2+).

The protein belongs to the DXR family. Mg(2+) serves as cofactor. Mn(2+) is required as a cofactor.

The catalysed reaction is 2-C-methyl-D-erythritol 4-phosphate + NADP(+) = 1-deoxy-D-xylulose 5-phosphate + NADPH + H(+). It functions in the pathway isoprenoid biosynthesis; isopentenyl diphosphate biosynthesis via DXP pathway; isopentenyl diphosphate from 1-deoxy-D-xylulose 5-phosphate: step 1/6. Functionally, catalyzes the NADPH-dependent rearrangement and reduction of 1-deoxy-D-xylulose-5-phosphate (DXP) to 2-C-methyl-D-erythritol 4-phosphate (MEP). This chain is 1-deoxy-D-xylulose 5-phosphate reductoisomerase, found in Anaplasma phagocytophilum (strain HZ).